A 176-amino-acid polypeptide reads, in one-letter code: Endoribonuclease YbeY (176 aa).

Histidine 128, histidine 132, and histidine 138 together coordinate Zn(2+).

This sequence belongs to the endoribonuclease YbeY family. Zn(2+) serves as cofactor.

It localises to the cytoplasm. Its function is as follows. Single strand-specific metallo-endoribonuclease involved in late-stage 70S ribosome quality control and in maturation of the 3' terminus of the 16S rRNA. The polypeptide is Endoribonuclease YbeY (Zymomonas mobilis subsp. mobilis (strain ATCC 31821 / ZM4 / CP4)).